Consider the following 565-residue polypeptide: Effector protease OspD3 (565 aa).

The protein belongs to the Toxin_15 family.

The protein localises to the secreted. Functionally, effector protease that disrupts necroptosis in host cells by mediating proteolytic cleavage of host RIPK1 and RIPK3. This chain is Effector protease OspD3, found in Shigella flexneri.